Reading from the N-terminus, the 682-residue chain is Amphiphysin (682 aa).

2 coiled-coil regions span residues 10-84 (AKNV…LHEV) and 144-191 (DYDS…QEEL). Positions 24 to 240 (VLQKLGKADE…MTKLGDQHAD (217 aa)) constitute a BAR domain. 4 disordered regions span residues 244 to 310 (TIQG…PKLT), 446 to 470 (ILAE…ETTG), 501 to 530 (GAVR…QEKV), and 561 to 606 (AAAE…ASDM). Positions 261–274 (PSPPEEVSPLPSPT) are enriched in pro residues. The span at 503 to 527 (VRTEQEAAAEGDKPQGEEKDVDVSQ) shows a compositional bias: basic and acidic residues. The segment covering 567–596 (TQGTDSETSQIGSEQKATEEIQTTPSQDQP) has biased composition (polar residues). One can recognise an SH3 domain in the interval 609–682 (GFLFKVEVLH…FPENFTRHLE (74 aa)).

Heterodimer with BIN1. Binds SH3GLB1. In terms of tissue distribution, is abundant in the forebrain and cerebellum. It is also found in the adrenal gland, anterior and posterior pituitary.

The protein resides in the cytoplasmic vesicle. It is found in the secretory vesicle. It localises to the synaptic vesicle membrane. Its subcellular location is the cytoplasm. The protein localises to the cytoskeleton. Its function is as follows. May participate in mechanisms of regulated exocytosis in synapses and certain endocrine cell types. May control the properties of the membrane associated cytoskeleton. This Gallus gallus (Chicken) protein is Amphiphysin (AMPH).